Here is a 959-residue protein sequence, read N- to C-terminus: Isoleucine--tRNA ligase (959 aa).

Residues 66-76 carry the 'HIGH' region motif; that stretch reads PYANGDLHIGH. Glutamate 592 provides a ligand contact to L-isoleucyl-5'-AMP. Residues 633–637 carry the 'KMSKS' region motif; it reads KMSKS. Lysine 636 contributes to the ATP binding site. Positions 922, 925, 942, and 945 each coordinate Zn(2+).

It belongs to the class-I aminoacyl-tRNA synthetase family. IleS type 1 subfamily. In terms of assembly, monomer. Zn(2+) is required as a cofactor.

It localises to the cytoplasm. The enzyme catalyses tRNA(Ile) + L-isoleucine + ATP = L-isoleucyl-tRNA(Ile) + AMP + diphosphate. Functionally, catalyzes the attachment of isoleucine to tRNA(Ile). As IleRS can inadvertently accommodate and process structurally similar amino acids such as valine, to avoid such errors it has two additional distinct tRNA(Ile)-dependent editing activities. One activity is designated as 'pretransfer' editing and involves the hydrolysis of activated Val-AMP. The other activity is designated 'posttransfer' editing and involves deacylation of mischarged Val-tRNA(Ile). The polypeptide is Isoleucine--tRNA ligase (Ralstonia pickettii (strain 12J)).